A 285-amino-acid polypeptide reads, in one-letter code: MAAEEVTLSSHIQHHLTNAKMCSTDAGLAFNKACADSGFWTWHVDTLAWSIGLGLIFLWIFRSAAKKSTLGVPGKFQCFIEIIVEFVGDNVRDTFHGKSKLIAPLALTIFVWVFLMNLMDLIPVDFLPSFAGFVGETAFGMDSHDVYMKIVPTTDINMTSALALGVFILMVGFAIKIKGIGGFIKELTLHPFSSNNVFVQILLIPFNLLLELIALVSKPFSLALRLFGNLYAGELIFILIGAIGFMQLPLHFVWAVFHILVITLQAFLFMMLTIVYLSMASSDNH.

A run of 6 helical transmembrane segments spans residues 41-61 (TWHVDTLAWSIGLGLIFLWIF), 102-122 (IAPLALTIFVWVFLMNLMDLI), 164-184 (LGVFILMVGFAIKIKGIGGFI), 197-217 (VFVQILLIPFNLLLELIALVS), 226-246 (LFGNLYAGELIFILIGAIGFM), and 252-272 (FVWAVFHILVITLQAFLFMML).

Belongs to the ATPase A chain family. In terms of assembly, F-type ATPases have 2 components, CF(1) - the catalytic core - and CF(0) - the membrane proton channel. CF(1) has five subunits: alpha(3), beta(3), gamma(1), delta(1), epsilon(1). CF(0) has three main subunits: a(1), b(2) and c(9-12). The alpha and beta chains form an alternating ring which encloses part of the gamma chain. CF(1) is attached to CF(0) by a central stalk formed by the gamma and epsilon chains, while a peripheral stalk is formed by the delta and b chains.

It localises to the cell inner membrane. In terms of biological role, key component of the proton channel; it plays a direct role in the translocation of protons across the membrane. The polypeptide is ATP synthase subunit a (Pseudoalteromonas translucida (strain TAC 125)).